A 58-amino-acid chain; its full sequence is Galectin-1 (58 aa).

The 57-residue stretch at 2 to 58 (GITXTSLHVAPGARLAVKGDIPAGAKSWVINLGKGENDIMLHFNARFDAHGDIRTIV) folds into the Galectin domain. A beta-D-galactoside contacts are provided by residues 43 to 47 (HFNAR) and histidine 51.

Monomer. As to expression, detected in most tissues, most abundantly in skin.

The protein resides in the secreted. Its subcellular location is the extracellular space. The protein localises to the extracellular matrix. Its function is as follows. May regulate cell apoptosis and cell differentiation. Binds beta-galactoside and a wide array of complex carbohydrates. The polypeptide is Galectin-1 (Podarcis hispanicus (Iberian wall lizard)).